The following is a 504-amino-acid chain: UNC93-like protein C922.05c (504 aa).

Helical transmembrane passes span 64–84 (IIVSWVCFLCPGMFNALSGLG), 97–116 (ANVALYSTFAGLGFFAGSIC), 123–145 (LTLAIGGTGYSVYTASLLCYKHV), 149–169 (GFVIFGGCYLGLTAGMLWAAQ), 186–206 (IAIFWGIFNLGAVIGSIVPLA), 219–239 (GTYAGFIVLMAVGSALALFMV), 275–293 (YWVLLLFPMFFSSNWFTTY), 310–330 (LNNLLYWFAQIMGSAVAALFL), 343–363 (VGWGLVFVLICVIWGGGLAFQ), 391–411 (FLYIFYGMLDAIFQSYAYWII), and 452–472 (YFASCWALLCGSLIVASPVIW).

It belongs to the unc-93 family.

The protein localises to the cytoplasm. The protein resides in the membrane. The sequence is that of UNC93-like protein C922.05c from Schizosaccharomyces pombe (strain 972 / ATCC 24843) (Fission yeast).